The sequence spans 86 residues: Anti-adapter protein IraP (86 aa).

The stretch at 1 to 36 (MKNLIAELLFKLAQKEEESKELCAQVEALEIIVTAM) forms a coiled coil.

This sequence belongs to the IraP family. As to quaternary structure, interacts with RssB.

Its subcellular location is the cytoplasm. Functionally, inhibits RpoS proteolysis by regulating RssB activity, thereby increasing the stability of the sigma stress factor RpoS especially during phosphate starvation, but also in stationary phase and during nitrogen starvation. Its effect on RpoS stability is due to its interaction with RssB, which probably blocks the interaction of RssB with RpoS, and the consequent delivery of the RssB-RpoS complex to the ClpXP protein degradation pathway. The chain is Anti-adapter protein IraP from Shigella flexneri serotype 5b (strain 8401).